The sequence spans 869 residues: Serendipity locus protein H-1 (869 aa).

Positions 1–17 (MEGGKGEGKRMKEEAPS) are enriched in basic and acidic residues. Disordered regions lie at residues 1-32 (MEGGKGEGKRMKEEAPSKKLPPKIYGGDAGTP) and 134-165 (FSVTFLRPEPPNAFTNSPFKKTSSSGTSTPVK). Positions 146–164 (AFTNSPFKKTSSSGTSTPV) are enriched in polar residues. 8 C2H2-type zinc fingers span residues 269 to 293 (HKCLDCNGLLLETPDEVAKHEAAAH), 299 to 321 (YRCSECQREFELLAGLKKHLKTH), 331 to 352 (KKCPDCGKCLKLGSMWMHRKIH), 358 to 380 (YQCDICGQKFVQKINLTHHARIH), 386 to 408 (YECPECQKRFQERSHLQRHQKYH), 414 to 436 (YRCEKCGKMYKTERCLKVHNLVH), 442 to 464 (FACTVCDKSFISNSKLKQHSNIH), and 470 to 493 (FKCNYCPRDFTNFPNWLKHTRRRH). 2 disordered regions span residues 554–573 (TSTAAPAPAKQARKKKQPQQ) and 617–652 (PKQTKAKRERKQLAPKQLQQKPQLLQQGQPQQSSLE). Residues 630–648 (APKQLQQKPQLLQQGQPQQ) show a composition bias toward low complexity.

As to expression, distribution varies between nurse cells and the oocyte during oogenesis. Weakly expressed in follicle and border cells.

It localises to the nucleus. Functionally, may belong to a complex set of multifingered proteins which play an important role in gene activation or regulation at early embryonic stages through a maximal accumulation of their transcripts (or protein product) in the mature oocyte. The polypeptide is Serendipity locus protein H-1 (wdn) (Drosophila melanogaster (Fruit fly)).